Here is a 130-residue protein sequence, read N- to C-terminus: Small ribosomal subunit protein uS11c (130 aa).

This sequence belongs to the universal ribosomal protein uS11 family. In terms of assembly, part of the 30S ribosomal subunit.

It localises to the plastid. The protein resides in the chloroplast. The polypeptide is Small ribosomal subunit protein uS11c (Pinus thunbergii (Japanese black pine)).